The following is a 1563-amino-acid chain: Pentafunctional AROM polypeptide (1563 aa).

The segment at 1–382 (MAESSSNPTR…YEPKASVVED (382 aa)) is 3-dehydroquinate synthase. Residues 48 to 50 (DTN), 82 to 85 (EYSK), 113 to 115 (GGV), and D118 contribute to the NAD(+) site. R129 contributes to the 7-phospho-2-dehydro-3-deoxy-D-arabino-heptonate binding site. 138 to 139 (TT) contributes to the NAD(+) binding site. Residues D145 and K151 each coordinate 7-phospho-2-dehydro-3-deoxy-D-arabino-heptonate. NAD(+) is bound at residue K160. N161 contributes to the 7-phospho-2-dehydro-3-deoxy-D-arabino-heptonate binding site. NAD(+) contacts are provided by residues 178-181 (FLNT) and N189. E193 is a Zn(2+) binding site. 7-phospho-2-dehydro-3-deoxy-D-arabino-heptonate contacts are provided by residues 193-196 (EVIK) and K248. The active-site Proton acceptor; for 3-dehydroquinate synthase activity is the E258. Residues 262 to 266 (RNLLN) and H269 contribute to the 7-phospho-2-dehydro-3-deoxy-D-arabino-heptonate site. Position 269 (H269) interacts with Zn(2+). Residue H273 is the Proton acceptor; for 3-dehydroquinate synthase activity of the active site. Residues H285 and K354 each contribute to the 7-phospho-2-dehydro-3-deoxy-D-arabino-heptonate site. H285 contacts Zn(2+). Positions 395 to 834 (VHAGVPKDLK…WDTMSNYFKS (440 aa)) are EPSP synthase. C816 functions as the For EPSP synthase activity in the catalytic mechanism. Residues 836–850 (LEGEEEPHSSHVSHE) are compositionally biased toward basic and acidic residues. The interval 836-857 (LEGEEEPHSSHVSHEKPRKGNP) is disordered. The shikimate kinase stretch occupies residues 857 to 1051 (PKSIFIIGMR…KKKPQSSFVS (195 aa)). 864–871 (GMRGAGKS) is an ATP binding site. The 3-dehydroquinase stretch occupies residues 1052–1265 (LTVPNVSKAL…AAPGQLSAAE (214 aa)). The active-site Proton acceptor; for 3-dehydroquinate dehydratase activity is H1168. Catalysis depends on K1196, which acts as the Schiff-base intermediate with substrate; for 3-dehydroquinate dehydratase activity. Residues 1278-1563 (PRSFYLFGKP…TDAQAAVMGN (286 aa)) are shikimate dehydrogenase.

The protein in the N-terminal section; belongs to the sugar phosphate cyclases superfamily. Dehydroquinate synthase family. This sequence in the 2nd section; belongs to the EPSP synthase family. In the 3rd section; belongs to the shikimate kinase family. It in the 4th section; belongs to the type-I 3-dehydroquinase family. The protein in the C-terminal section; belongs to the shikimate dehydrogenase family. In terms of assembly, homodimer. Requires Zn(2+) as cofactor.

The protein resides in the cytoplasm. It catalyses the reaction 7-phospho-2-dehydro-3-deoxy-D-arabino-heptonate = 3-dehydroquinate + phosphate. It carries out the reaction 3-dehydroquinate = 3-dehydroshikimate + H2O. The enzyme catalyses shikimate + NADP(+) = 3-dehydroshikimate + NADPH + H(+). The catalysed reaction is shikimate + ATP = 3-phosphoshikimate + ADP + H(+). It catalyses the reaction 3-phosphoshikimate + phosphoenolpyruvate = 5-O-(1-carboxyvinyl)-3-phosphoshikimate + phosphate. It functions in the pathway metabolic intermediate biosynthesis; chorismate biosynthesis; chorismate from D-erythrose 4-phosphate and phosphoenolpyruvate: step 2/7. Its pathway is metabolic intermediate biosynthesis; chorismate biosynthesis; chorismate from D-erythrose 4-phosphate and phosphoenolpyruvate: step 3/7. The protein operates within metabolic intermediate biosynthesis; chorismate biosynthesis; chorismate from D-erythrose 4-phosphate and phosphoenolpyruvate: step 4/7. It participates in metabolic intermediate biosynthesis; chorismate biosynthesis; chorismate from D-erythrose 4-phosphate and phosphoenolpyruvate: step 5/7. It functions in the pathway metabolic intermediate biosynthesis; chorismate biosynthesis; chorismate from D-erythrose 4-phosphate and phosphoenolpyruvate: step 6/7. The AROM polypeptide catalyzes 5 consecutive enzymatic reactions in prechorismate polyaromatic amino acid biosynthesis. The chain is Pentafunctional AROM polypeptide from Sordaria macrospora (strain ATCC MYA-333 / DSM 997 / K(L3346) / K-hell).